We begin with the raw amino-acid sequence, 188 residues long: Elongation factor P (188 aa).

Lys34 is modified (N6-(3,6-diaminohexanoyl)-5-hydroxylysine).

Belongs to the elongation factor P family. May be beta-lysylated on the epsilon-amino group of Lys-34 by the combined action of EpmA and EpmB, and then hydroxylated on the C5 position of the same residue by EpmC (if this protein is present). Lysylation is critical for the stimulatory effect of EF-P on peptide-bond formation. The lysylation moiety may extend toward the peptidyltransferase center and stabilize the terminal 3-CCA end of the tRNA. Hydroxylation of the C5 position on Lys-34 may allow additional potential stabilizing hydrogen-bond interactions with the P-tRNA.

It is found in the cytoplasm. The protein operates within protein biosynthesis; polypeptide chain elongation. Involved in peptide bond synthesis. Alleviates ribosome stalling that occurs when 3 or more consecutive Pro residues or the sequence PPG is present in a protein, possibly by augmenting the peptidyl transferase activity of the ribosome. Modification of Lys-34 is required for alleviation. This Vibrio cholerae serotype O1 (strain ATCC 39541 / Classical Ogawa 395 / O395) protein is Elongation factor P.